The sequence spans 403 residues: Synaptotagmin-7 (403 aa).

Residues 1-16 (MYRDPEAASPGAPTRD) lie on the Vesicular side of the membrane. The chain crosses the membrane as a helical span at residues 17-37 (VLLVSAIITVSLSVTIVLCGL). The Cytoplasmic portion of the chain corresponds to 38-403 (CHWCQRKLGK…PVAQWHQLKA (366 aa)). S52 carries the post-translational modification Phosphoserine. The segment at 53–103 (LETVGTPDSGRGRGEKKAIKLPAGGKAVNTAPVPGQTPHDESDRRTETRSS) is disordered. T58 is subject to Phosphothreonine. At S61 the chain carries Phosphoserine. Over residues 90–100 (PHDESDRRTET) the composition is skewed to basic and acidic residues. Phosphoserine is present on residues S119 and S122. C2 domains follow at residues 135–255 (NLGR…TFWK) and 266–399 (SRGE…AQWH). D166 is a Ca(2+) binding site. G169 and S171 each carry asymmetric dimethylarginine. Positions 172, 225, 227, 230, 233, 297, 303, 357, 359, 362, and 365 each coordinate Ca(2+).

The protein belongs to the synaptotagmin family. In terms of assembly, homodimer. Can also form heterodimers with SYT6, SYT9 and SYT10. Interacts with calmodulin (CALM1, CALM2 or CALM3). Interacts with CD63; required for localization to lysosomes. Interacts with APP. Requires Ca(2+) as cofactor. Palmitoylated at its vesicular N-terminus; palmitoylation is required for localization to lysosome and phagocytosis in macrophages. In terms of tissue distribution, widely expressed. Expressed in insulin-secreting cells. Present in glucagon-secreting cells (at protein level).

The protein localises to the cell membrane. The protein resides in the presynaptic cell membrane. It localises to the cytoplasmic vesicle. Its subcellular location is the secretory vesicle. It is found in the synaptic vesicle membrane. The protein localises to the lysosome membrane. The protein resides in the phagosome membrane. It localises to the peroxisome membrane. Its subcellular location is the secretory vesicle membrane. In terms of biological role, ca(2+) sensor involved in Ca(2+)-dependent exocytosis of secretory and synaptic vesicles through Ca(2+) and phospholipid binding to the C2 domain. Ca(2+) induces binding of the C2-domains to phospholipid membranes and to assembled SNARE-complexes; both actions contribute to triggering exocytosis. SYT7 binds Ca(2+) with high affinity and slow kinetics compared to other synaptotagmins. Involved in Ca(2+)-triggered lysosomal exocytosis, a major component of the plasma membrane repair. Ca(2+)-regulated delivery of lysosomal membranes to the cell surface is also involved in the phagocytic uptake of particles by macrophages. Ca(2+)-triggered lysosomal exocytosis also plays a role in bone remodeling by regulating secretory pathways in osteoclasts and osteoblasts. Involved in cholesterol transport from lysosome to peroxisome by promoting membrane contacts between lysosomes and peroxisomes: probably acts by promoting vesicle fusion by binding phosphatidylinositol-4,5-bisphosphate on peroxisomal membranes. Acts as a key mediator of synaptic facilitation, a process also named short-term synaptic potentiation: synaptic facilitation takes place at synapses with a low initial release probability and is caused by influx of Ca(2+) into the axon terminal after spike generation, increasing the release probability of neurotransmitters. Probably mediates synaptic facilitation by directly increasing the probability of release. May also contribute to synaptic facilitation by regulating synaptic vesicle replenishment, a process required to ensure that synaptic vesicles are ready for the arrival of the next action potential: SYT7 is required for synaptic vesicle replenishment by acting as a sensor for Ca(2+) and by forming a complex with calmodulin. Also acts as a regulator of Ca(2+)-dependent insulin and glucagon secretion in beta-cells. Triggers exocytosis by promoting fusion pore opening and fusion pore expansion in chromaffin cells. Also regulates the secretion of some non-synaptic secretory granules of specialized cells. In Mus musculus (Mouse), this protein is Synaptotagmin-7.